Here is a 336-residue protein sequence, read N- to C-terminus: Fructose-1,6-bisphosphatase class 1 (336 aa).

Mg(2+) is bound by residues Glu90, Asp112, Leu114, and Asp115. Residues Asp115–Ser118, Asn211, and Lys277 each bind substrate. Residue Glu283 coordinates Mg(2+).

This sequence belongs to the FBPase class 1 family. Homotetramer. It depends on Mg(2+) as a cofactor.

It localises to the cytoplasm. It carries out the reaction beta-D-fructose 1,6-bisphosphate + H2O = beta-D-fructose 6-phosphate + phosphate. It participates in carbohydrate biosynthesis; gluconeogenesis. The protein is Fructose-1,6-bisphosphatase class 1 of Pseudomonas savastanoi pv. phaseolicola (strain 1448A / Race 6) (Pseudomonas syringae pv. phaseolicola (strain 1448A / Race 6)).